The chain runs to 204 residues: Lysozyme g (204 aa).

Residues 1–19 (MHLMLVLLGLAALLGTSQS) form the signal peptide. 2 disulfide bridges follow: Cys-23–Cys-79 and Cys-37–Cys-48. Active-site residues include Glu-92 and Asp-105.

It belongs to the glycosyl hydrolase 23 family.

Its subcellular location is the secreted. The catalysed reaction is Hydrolysis of (1-&gt;4)-beta-linkages between N-acetylmuramic acid and N-acetyl-D-glucosamine residues in a peptidoglycan and between N-acetyl-D-glucosamine residues in chitodextrins.. Its function is as follows. Has bacteriolytic activity against M.luteus. In Struthio camelus (Common ostrich), this protein is Lysozyme g.